Consider the following 237-residue polypeptide: Phosphoribosylaminoimidazole-succinocarboxamide synthase (237 aa).

Belongs to the SAICAR synthetase family.

The catalysed reaction is 5-amino-1-(5-phospho-D-ribosyl)imidazole-4-carboxylate + L-aspartate + ATP = (2S)-2-[5-amino-1-(5-phospho-beta-D-ribosyl)imidazole-4-carboxamido]succinate + ADP + phosphate + 2 H(+). It functions in the pathway purine metabolism; IMP biosynthesis via de novo pathway; 5-amino-1-(5-phospho-D-ribosyl)imidazole-4-carboxamide from 5-amino-1-(5-phospho-D-ribosyl)imidazole-4-carboxylate: step 1/2. The protein is Phosphoribosylaminoimidazole-succinocarboxamide synthase of Serratia proteamaculans (strain 568).